The following is a 147-amino-acid chain: Hemoglobin subunit epsilon (147 aa).

Positions 3-147 (HFTAEEKAAI…VAIALGHKYH (145 aa)) constitute a Globin domain. 2 positions are modified to phosphoserine: Ser-14 and Ser-51. Heme b contacts are provided by His-64 and His-93.

It belongs to the globin family. In terms of assembly, heterotetramer of two alpha chains and two epsilon chains in early embryonic hemoglobin Gower-2; two zeta chains and two epsilon chains in early embryonic hemoglobin Gower-1. As to expression, red blood cells.

Its function is as follows. The epsilon chain is a beta-type chain of early mammalian embryonic hemoglobin. The polypeptide is Hemoglobin subunit epsilon (HBE1) (Saimiri boliviensis boliviensis (Bolivian squirrel monkey)).